The chain runs to 299 residues: Putative pyrroline-5-carboxylate reductase 4 (299 aa).

This sequence belongs to the pyrroline-5-carboxylate reductase family.

The enzyme catalyses L-proline + NADP(+) = (S)-1-pyrroline-5-carboxylate + NADPH + 2 H(+). It catalyses the reaction L-proline + NAD(+) = (S)-1-pyrroline-5-carboxylate + NADH + 2 H(+). Its pathway is amino-acid biosynthesis; L-proline biosynthesis; L-proline from L-glutamate 5-semialdehyde: step 1/1. In Caenorhabditis elegans, this protein is Putative pyrroline-5-carboxylate reductase 4.